A 188-amino-acid polypeptide reads, in one-letter code: MEQYRGTTILSVRRGAEVALGGDGQVTLGNIVIKSTARKIRRLYQEKVLAGFAGGTADAFTLFERFEAKLDKHSGHLLRSAVELAKDWRTDRMLRRLEAMLAVADREHSLIITGNGDVLEPELGIAAIGSGGAFAQSAARALLENTDLAPLEIVKKSLTIAGDICIYSNQNHVIEVLGDRGQDSGVRE.

Thr-7 is an active-site residue. Na(+) is bound by residues Gly-162, Cys-165, and Ser-168.

Belongs to the peptidase T1B family. HslV subfamily. As to quaternary structure, a double ring-shaped homohexamer of HslV is capped on each side by a ring-shaped HslU homohexamer. The assembly of the HslU/HslV complex is dependent on binding of ATP.

The protein resides in the cytoplasm. The enzyme catalyses ATP-dependent cleavage of peptide bonds with broad specificity.. Allosterically activated by HslU binding. In terms of biological role, protease subunit of a proteasome-like degradation complex believed to be a general protein degrading machinery. This Thiobacillus denitrificans (strain ATCC 25259 / T1) protein is ATP-dependent protease subunit HslV.